The primary structure comprises 87 residues: Kawaguchipeptin peptide (87 aa).

The propeptide occupies 1–33 (MKNPTLLPKLTAPVERPAVTSSDLKQASSVDAA). Trp34 is lipidated: 3'-prenyl-2',N2-cyclotryptophan; partial. The cyclopeptide (Trp-Pro) cross-link spans 34-44 (WLNGDNNWSTP). Position 35 is a D-leucine; partial (Leu35). Trp41 carries 3'-prenyl-2',N2-cyclotryptophan; partial lipidation. Residues 45–51 (FAGVNAA) constitute a propeptide that is removed on maturation. The 3'-prenyl-2',N2-cyclotryptophan; partial moiety is linked to residue Trp52. The segment at residues 52–62 (WLNGDNNWSTP) is a cross-link (cyclopeptide (Trp-Pro)). Leu53 carries the D-leucine; partial modification. Residue Trp59 is the site of 3'-prenyl-2',N2-cyclotryptophan; partial attachment. The propeptide occupies 63-69 (FAGVNAA). Residue Trp70 is the site of 3'-prenyl-2',N2-cyclotryptophan; partial attachment. Residues 70–80 (WLNGDNNWSTP) constitute a cross-link (cyclopeptide (Trp-Pro)). Position 71 is a D-leucine; partial (Leu71). Trp77 is lipidated: 3'-prenyl-2',N2-cyclotryptophan; partial. Residues 81 to 87 (FAADGAE) constitute a propeptide that is removed on maturation.

In terms of processing, kawaguchipeptin A contains a D-Leu and 2 prenylated Trp, whereas kawaguchipeptin B only contains unmodified amino acids. Post-translationally, kawaguchipeptin A is prenylated in vivo. Upon expression in E.coli of the whole operon, Trp residues are prenylated by C-prenyltransferase KgpF. Prenylation by KgpF is likely the last enzymatic step in the biosynthetic maturation of kawaguchipeptin A.

Functionally, both kawaguchipeptin A and B, which only differ by post-translational modifications, have antibacterial activities, since they inhibit the growth of the Gram-positive bacterium S.aureus at a concentration of 1 ug/mL. The sequence is that of Kawaguchipeptin peptide from Microcystis aeruginosa (strain NIES-88 / KW-MA1-3).